Reading from the N-terminus, the 280-residue chain is uncharacterized protein (280 aa).

The first 21 residues, M1–A21, serve as a signal peptide directing secretion.

This sequence to M.leprae ML2432 and S.coelicolor SCO3347.

This is an uncharacterized protein from Mycobacterium tuberculosis (strain CDC 1551 / Oshkosh).